The chain runs to 232 residues: Large ribosomal subunit protein uL1 (232 aa).

This sequence belongs to the universal ribosomal protein uL1 family. As to quaternary structure, part of the 50S ribosomal subunit.

Its function is as follows. Binds directly to 23S rRNA. The L1 stalk is quite mobile in the ribosome, and is involved in E site tRNA release. In terms of biological role, protein L1 is also a translational repressor protein, it controls the translation of the L11 operon by binding to its mRNA. This is Large ribosomal subunit protein uL1 from Amoebophilus asiaticus (strain 5a2).